The sequence spans 744 residues: MMNMKIVLFSLLLFVIRWNIISCNKNDKNQGVDMNVLNNYENLFKFVKCEYCNEHTYVKGKKAPSDPQCADIKEECKELLKEKQYTDSVTYLMDGFKSANNSANNGKKNNAEEMKNLVNFLQSHKKLIKALKKNIESIQNKKHLIYKNKSYNPLLLSCVKKMNMLKENVDYIQKNQNLFKELMNQKATYSFVNTKKKIISLKSQGHKKETSQNQNENNDNQKYQEVNDEDDVNDEEDTNDDEDTNDEEDTNDDEDTNDDEDTNDEEDTNDEEDHENNNATAYELGIVPVNDVLNVNMKNMITGNNFMDVVKNTLAQSGGLGSNDLINFLNQGKEIGENLLNITKMNLGDKNNLESFPLDELNMLKDNLINYEFILDNLKTSVLNKLKDLLLRLLYKAYVSYKKRKAQEKGLPEPTVTNEEYVEELKKGILDMGIKLLFSKVKSLLKKLKNKIFPKKKEDNQAVDTKSMEEPKVKAQPALRGVEPTEDSNIMNSINNVMDEIDFFEKELIENNNTPNVVPPTQSKKKNKNETVSGMDENFDNHPENYFKEEYYYDENDDMEVKVKKIGVTLKKFEPLKNGNVSETIKLIHLGNKDKKHIEAINNDIQIIKQELQAIYNELMNYTNGNKNIQQIFQQNILENDVLNQETEEEMEKQVEAITKQIEAEVDALAPKNKEEEEKEKEKEKEKEEKEKEEKEKEEKEEEEKEKEKEKEEKEKEEKEKEEEQEEEEEEEIVPENLTTEESK.

Positions 1-23 (MMNMKIVLFSLLLFVIRWNIISC) are cleaved as a signal peptide. Positions 77–235 (KELLKEKQYT…VNDEDDVNDE (159 aa)) are interaction with MSP1 and host SLC4A1/Band 3. Disordered regions lie at residues 202–282 (KSQG…ATAY), 459–487 (DNQA…PTED), 512–540 (NNTP…ENFD), and 666–744 (VDAL…EESK). The span at 211 to 224 (SQNQNENNDNQKYQ) shows a compositional bias: polar residues. 8 consecutive repeat copies span residues 226–231 (VNDEDD), 232–237 (VNDEED), 238–243 (TNDDED), 244–249 (TNDEED), 250–255 (TNDDED), 256–261 (TNDDED), 262–267 (TNDEED), and 268–273 (TNDEED). The interval 226–273 (VNDEDDVNDEEDTNDDEDTNDEEDTNDDEDTNDDEDTNDEEDTNDEED) is 8 X 6 AA tandem repeats of [VT]-N-D-[ED]-[ED]-D. Positions 226 to 274 (VNDEDDVNDEEDTNDDEDTNDEEDTNDDEDTNDDEDTNDEEDTNDEEDH) are enriched in acidic residues. Residues 364-528 (LKDNLINYEF…PPTQSKKKNK (165 aa)) are interaction with MSP1 and host SLC4A1/Band 3. The segment covering 459 to 473 (DNQAVDTKSMEEPKV) has biased composition (basic and acidic residues). Low complexity predominate over residues 512–521 (NNTPNVVPPT). Positions 644–734 (NQETEEEMEK…QEEEEEEEIV (91 aa)) form a coiled coil. Composition is skewed to basic and acidic residues over residues 672-698 (KNKE…KEKE) and 706-719 (EKEK…KEEK). Positions 720–734 (EKEEEQEEEEEEEIV) are enriched in acidic residues.

It belongs to the plasmodium ABRA family. Forms a complex composed of MSP1, MSP6, MSP7, MSP9 and MSP3; within the complex, MSP6 and MSP9 mediate the binding to the host erythrocyte. Interacts with MSP1 subunits p19 and p42; the interaction is direct. Interacts with host SLC4A1/Band 3 protein (via the 5ABC region). MSP1 subunits p19 or p42, and MSP9 form a co-ligand complex that interacts with host SLC4A1/Band 3 protein. Post-translationally, not glycosylated.

It localises to the cell membrane. It is found in the parasitophorous vacuole lumen. The protein resides in the secreted. Functionally, during the asexual blood stage, involved in the sialic acid-independent (SAID) merozoite invasion of host erythrocytes by binding to host SLC4A1/Band 3 protein on the surface of the host erythrocyte. In Plasmodium falciparum (isolate 7G8), this protein is Merozoite surface protein 9.